The primary structure comprises 378 residues: Spermidine/putrescine import ATP-binding protein PotA (378 aa).

Positions 18 to 248 (VQLAGIRKCF…PKNLFVAGFI (231 aa)) constitute an ABC transporter domain. 50-57 (GPSGCGKT) provides a ligand contact to ATP.

It belongs to the ABC transporter superfamily. Spermidine/putrescine importer (TC 3.A.1.11.1) family. As to quaternary structure, the complex is composed of two ATP-binding proteins (PotA), two transmembrane proteins (PotB and PotC) and a solute-binding protein (PotD).

Its subcellular location is the cell inner membrane. It catalyses the reaction ATP + H2O + polyamine-[polyamine-binding protein]Side 1 = ADP + phosphate + polyamineSide 2 + [polyamine-binding protein]Side 1.. In terms of biological role, part of the ABC transporter complex PotABCD involved in spermidine/putrescine import. Responsible for energy coupling to the transport system. The protein is Spermidine/putrescine import ATP-binding protein PotA of Shigella dysenteriae serotype 1 (strain Sd197).